A 488-amino-acid chain; its full sequence is Spermatogenesis-associated protein 6 (488 aa).

An N-terminal signal peptide occupies residues 1-17 (MPKVKALQCALALEIRS). The interval 176-225 (HGRLQCRTSRSQKKKSKSPERSKYCINTKNYEQPTISSKSHSPSPYTKRR) is disordered. Over residues 200–220 (CINTKNYEQPTISSKSHSPSP) the composition is skewed to polar residues. Residues Ser-217 and Ser-219 each carry the phosphoserine modification. Lys-248 participates in a covalent cross-link: Glycyl lysine isopeptide (Lys-Gly) (interchain with G-Cter in SUMO2). A phosphoserine mark is found at Ser-265, Ser-274, Ser-325, Ser-343, Ser-346, Ser-354, Ser-424, Ser-465, and Ser-487.

This sequence belongs to the SPATA6 family. In terms of assembly, interacts with MYL6. As to expression, specifically expressed in developing spermatids and mature spermatozoa (at protein level). Isoform 1 is weakly expressed in testis, ovary, thymus and placenta. Isoform 2 and isoform 3 are testis-specific. Expression isw higher in spermatids than in spermatocytes and spermatogonia.

It localises to the secreted. The protein resides in the cell projection. It is found in the cilium. Its subcellular location is the flagellum. Functionally, required for formation of the sperm connecting piece during spermiogenesis. Sperm connecting piece is essential for linking the developing flagellum to the head during late spermiogenesis. May be involved in myosin-based microfilament transport through interaction with myosin subunits. The polypeptide is Spermatogenesis-associated protein 6 (Mus musculus (Mouse)).